Here is a 365-residue protein sequence, read N- to C-terminus: Quinolone epoxide rearrangement protein asqO (365 aa).

This sequence belongs to the quinolone epoxide rearrangement protein penF family.

The catalysed reaction is (1'E,3'E)-5-(3,3-dimethyloxiran-2-yl)-3-methylhexa-1,3-dienyl-quinolinone B = aspoquinolone A. The enzyme catalyses (1'E,3'E)-5-(3,3-dimethyloxiran-2-yl)-3-methylhexa-1,3-dienyl-quinolinone B = aspoquinolone B. Its pathway is secondary metabolite biosynthesis. The protein operates within alkaloid biosynthesis. It functions in the pathway mycotoxin biosynthesis. Its function is as follows. Quinolone epoxide rearrangement protein; part of the gene cluster that mediates the biosynthesis of the aspoquinolone mycotoxins. Within the pathway, asqO catalyzes an enzymatic 3-exo-tet cyclization to yield the cyclopropyl-THF ring system in aspoquinolone. The first step of the pathway is catalyzed by the nonribosomal peptide synthetase asqK that condenses anthranilic acid and O-methyl-L-tyrosine to produce 4'-methoxycyclopeptin. 4'-methoxycyclopeptin is then converted to 4'-methoxydehydrocyclopeptin by the ketoglutarate-dependent dioxygenase asqJ. AsqJ also converts its first product 4'-methoxydehydrocyclopeptin to 4'-methoxycyclopenin. The following conversion of 4'-methoxycyclopenin into 4'-methoxyviridicatin is catalyzed by the cyclopenase asqI. 4'-methoxyviridicatin is the precursor of quinolone natural products, and is further converted to quinolinone B. The prenyltransferase asqH1 then catalyzes the canonical Friedel-Crafts alkylation of quinolinone B with dimethylallyl cation to yield dimethylallyl quinolone, which is subjected to FAD-dependent dehydrogenation by the FAD-linked oxidoreductase asqF to yield conjugated aryl diene. The delta(3') double bond then serves as the site of the second alkylation with DMAPP catalyzed by the prenyltransferase asqH2 to yield a carbenium ion intermediate, which can be attacked by H(2)O to yield a styrenyl quinolone containing a C3'-hydroxyprenyl chain. The FAD-dependent monooxygenase asqG performs epoxidation of the terminal C7'-C8' olefin. Finally, after dehydratation of the epoxide at C3 by asqC, the quinolone epoxide rearrangement protein asqO catalyzes an enzymatic 3-exo-tet cyclization to yield the cyclopropyl-THF ring system in aspoquinolone. This chain is Quinolone epoxide rearrangement protein asqO, found in Emericella nidulans (strain FGSC A4 / ATCC 38163 / CBS 112.46 / NRRL 194 / M139) (Aspergillus nidulans).